The chain runs to 728 residues: Elongation factor 2 (728 aa).

The 241-residue stretch at 18 to 258 (KFIRNIGIVA…MVIRHLPSPI (241 aa)) folds into the tr-type G domain. GTP-binding positions include 27-34 (AHIDHGKT), 93-97 (DTPGH), and 147-150 (NKVD). A Diphthamide modification is found at His594.

The protein belongs to the TRAFAC class translation factor GTPase superfamily. Classic translation factor GTPase family. EF-G/EF-2 subfamily.

It is found in the cytoplasm. Catalyzes the GTP-dependent ribosomal translocation step during translation elongation. During this step, the ribosome changes from the pre-translocational (PRE) to the post-translocational (POST) state as the newly formed A-site-bound peptidyl-tRNA and P-site-bound deacylated tRNA move to the P and E sites, respectively. Catalyzes the coordinated movement of the two tRNA molecules, the mRNA and conformational changes in the ribosome. The protein is Elongation factor 2 (fusA) of Archaeoglobus fulgidus (strain ATCC 49558 / DSM 4304 / JCM 9628 / NBRC 100126 / VC-16).